The sequence spans 975 residues: Kinesin heavy chain (975 aa).

One can recognise a Kinesin motor domain in the interval 12–333; sequence SIKVVCRFRP…LDFGRRAKTV (322 aa). 92–99 is an ATP binding site; sequence GQTSSGKT. The interval 180–321 is microtubule-binding; the sequence is VSSPEDVFEV…PASFNESETK (142 aa). A coiled-coil region spans residues 335-931; sequence NVVCVNEELT…DRIKEAVRQK (597 aa). Residues 810–891 are necessary for associating with milt; it reads VAKELQTLHN…LPKLEKRLRC (82 aa). Positions 932–975 are globular; sequence HLGRRGPQAQIAKPIRSGQGAIAIRGGGAVGGPSPLAQVNPVNS.

It belongs to the TRAFAC class myosin-kinesin ATPase superfamily. Kinesin family. Kinesin subfamily. As to quaternary structure, oligomer composed of two heavy chains and two light chains.

Its subcellular location is the cytoplasm. The protein localises to the cytoskeleton. Functionally, kinesin is a microtubule-associated force-producing protein that may play a role in organelle transport. Milt and Miro form an essential protein complex that links Khc to mitochondria for light chain-independent, anterograde transport of mitochondria. This chain is Kinesin heavy chain (Khc), found in Drosophila melanogaster (Fruit fly).